A 61-amino-acid polypeptide reads, in one-letter code: Large ribosomal subunit protein bL28 (61 aa).

It belongs to the bacterial ribosomal protein bL28 family.

The sequence is that of Large ribosomal subunit protein bL28 from Lachnospira eligens (strain ATCC 27750 / DSM 3376 / VPI C15-48 / C15-B4) (Eubacterium eligens).